The primary structure comprises 287 residues: Uroplakin-3a (287 aa).

A signal peptide spans 1–18; it reads MPPLWALLALGCLRFGSA. Residues 19-207 are Lumenal-facing; it reads VNLQPQLASV…DTWPGRRSGG (189 aa). N-linked (GlcNAc...) asparagine glycosylation is found at N74, N139, and N170. Residues 208-235 traverse the membrane as a helical segment; that stretch reads MIVITSILGSLPFFLLVGFAGAIALSLV. The Cytoplasmic portion of the chain corresponds to 236 to 287; that stretch reads DMGSSDGETTHDSQITQEAVPKSLGASESSYTSVNRGPPLDRAEVYSSKLQD. The interval 242–287 is disordered; that stretch reads GETTHDSQITQEAVPKSLGASESSYTSVNRGPPLDRAEVYSSKLQD. Polar residues predominate over residues 261-270; it reads ASESSYTSVN.

It belongs to the uroplakin-3 family. Heterodimer with uroplakin-1B (UPK1B). Expressed in ureter.

The protein resides in the endoplasmic reticulum membrane. Its function is as follows. Component of the asymmetric unit membrane (AUM); a highly specialized biomembrane elaborated by terminally differentiated urothelial cells. May play an important role in AUM-cytoskeleton interaction in terminally differentiated urothelial cells. It also contributes to the formation of urothelial glycocalyx which may play an important role in preventing bacterial adherence. In Homo sapiens (Human), this protein is Uroplakin-3a (UPK3A).